The following is a 556-amino-acid chain: Formate--tetrahydrofolate ligase (556 aa).

Residue 64-71 (TPAGEGKT) participates in ATP binding.

Belongs to the formate--tetrahydrofolate ligase family.

It catalyses the reaction (6S)-5,6,7,8-tetrahydrofolate + formate + ATP = (6R)-10-formyltetrahydrofolate + ADP + phosphate. Its pathway is one-carbon metabolism; tetrahydrofolate interconversion. The polypeptide is Formate--tetrahydrofolate ligase (Actinobacillus pleuropneumoniae serotype 5b (strain L20)).